Consider the following 360-residue polypeptide: Alpha-N-acetyl-neuraminyl-2,3-beta-galactosyl-1,3-N-acetyl-galactosaminide alpha-2,6-sialyltransferase (360 aa).

The Cytoplasmic segment spans residues 1–71 (MEHVVTCWRL…PGRLLLLTLC (71 aa)). A helical; Signal-anchor for type II membrane protein membrane pass occupies residues 72–94 (ILTFSAVCVFLCCWACLPLCLAT). Topologically, residues 95-360 (CLDRHLPAAP…VFAHPSWRAK (266 aa)) are lumenal. Cys134 and Cys283 are disulfide-bonded. Asn193 is a glycosylation site (N-linked (GlcNAc...) asparagine).

The protein belongs to the glycosyltransferase 29 family. High expression in brain and colon and to a lesser extent in lung, heart, kidney, spleen and thymus.

Its subcellular location is the golgi apparatus membrane. The catalysed reaction is an alpha-Neu5Ac-(2-&gt;3)-beta-D-Gal-(1-&gt;3)-D-GlcNAc derivative + CMP-N-acetyl-beta-neuraminate = an alpha-Neu5Ac-(2-&gt;3)-beta-D-Gal-(1-&gt;3)-[alpha-Neu5Ac-(2-&gt;6)]-D-GlcNAc derivative + CMP + H(+). It carries out the reaction N-acetyl-alpha-neuraminosyl-(2-&gt;3)-beta-D-galactosyl-(1-&gt;3)-N-acetyl-D-galactosamine + CMP-N-acetyl-beta-neuraminate = N-acetyl-alpha-neuraminosyl-(2-&gt;3)-beta-D-galactosyl-(1-&gt;3)-[N-acetyl-alpha-neuraminosyl-(2-&gt;6)]-N-acetyl-D-galactosamine + CMP + H(+). The enzyme catalyses a ganglioside GM1b (d18:1(4E)) + CMP-N-acetyl-beta-neuraminate = a ganglioside GD1alpha (d18:1(4E)) + CMP + H(+). It catalyses the reaction 3-O-[alpha-Neu5Ac-(2-&gt;3)-beta-D-Gal-(1-&gt;3)-alpha-D-GalNAc]-L-Ser-[protein] + CMP-N-acetyl-beta-neuraminate = a 3-O-{alpha-Neu5Ac-(2-&gt;3)-beta-D-Gal-(1-&gt;3)-[alpha-Neu5Ac-(2-&gt;6)]-alpha-D-GalNAc}-L-seryl-[protein] + CMP + H(+). The catalysed reaction is 3-O-[alpha-Neu5Ac-(2-&gt;3)-beta-D-Gal-(1-&gt;3)-alpha-D-GalNAc]-L-Thr-[protein] + CMP-N-acetyl-beta-neuraminate = a 3-O-{alpha-Neu5Ac-(2-&gt;3)-beta-D-Gal-(1-&gt;3)-[alpha-Neu5Ac-(2-&gt;6)]-alpha-D-GalNAc}-L-threonyl-[protein] + CMP + H(+). It functions in the pathway protein modification; protein glycosylation. It participates in glycolipid biosynthesis. In terms of biological role, transfers the sialyl group (N-acetyl-alpha-neuraminyl or NeuAc) from CMP-NeuAc to the GalNAc residue on the NeuAc-alpha-2,3-Gal-beta-1,3-GalNAc sequence of glycoproteins and glycolipids forming an alpha-2,6-linkage. Produces branched type disialyl structures by transfer of a sialyl group onto a GalNAc residue inside the backbone core chains. Prefers O-glycans to glycoproteins or glycolipids. This Mus musculus (Mouse) protein is Alpha-N-acetyl-neuraminyl-2,3-beta-galactosyl-1,3-N-acetyl-galactosaminide alpha-2,6-sialyltransferase (St6galnac4).